A 337-amino-acid chain; its full sequence is Protein RecA (337 aa).

Position 66-73 (66-73 (GPESSGKT)) interacts with ATP.

Belongs to the RecA family.

It localises to the cytoplasm. In terms of biological role, can catalyze the hydrolysis of ATP in the presence of single-stranded DNA, the ATP-dependent uptake of single-stranded DNA by duplex DNA, and the ATP-dependent hybridization of homologous single-stranded DNAs. It interacts with LexA causing its activation and leading to its autocatalytic cleavage. The sequence is that of Protein RecA from Mesomycoplasma hyopneumoniae (strain J / ATCC 25934 / NCTC 10110) (Mycoplasma hyopneumoniae).